The primary structure comprises 269 residues: Octanoyltransferase LipM (269 aa).

The 209-residue stretch at 31-239 folds into the BPL/LPL catalytic domain; the sequence is NHGAPVLRFY…GFSEGFEVNF (209 aa). Residue Cys-141 is the Acyl-thioester intermediate of the active site.

Belongs to the octanoyltransferase LipM family. Monomer.

The catalysed reaction is octanoyl-[ACP] + L-lysyl-[protein] = N(6)-octanoyl-L-lysyl-[protein] + holo-[ACP] + H(+). Its pathway is protein modification; protein lipoylation via endogenous pathway; protein N(6)-(lipoyl)lysine from octanoyl-[acyl-carrier-protein]. In terms of biological role, catalyzes the transfer of endogenously produced octanoic acid from octanoyl-acyl-carrier-protein onto the lipoyl domain of GcvH, an intermediate carrier during protein lipoylation. This chain is Octanoyltransferase LipM, found in Carboxydothermus hydrogenoformans (strain ATCC BAA-161 / DSM 6008 / Z-2901).